A 256-amino-acid polypeptide reads, in one-letter code: UPF0259 membrane protein YPO2199/y2042/YP_1997 (256 aa).

6 helical membrane-spanning segments follow: residues 20–40 (IAAI…LNQT), 90–110 (FSAL…IAMV), 118–138 (ALQA…LMFI), 141–161 (LVIQ…AIAL), 192–212 (LIVP…FLIS), and 221–241 (IATI…LVYL).

This sequence belongs to the UPF0259 family.

Its subcellular location is the cell inner membrane. The chain is UPF0259 membrane protein YPO2199/y2042/YP_1997 from Yersinia pestis.